The chain runs to 130 residues: Fluoride-specific ion channel FluC (130 aa).

4 helical membrane-spanning segments follow: residues 2 to 22 (GLLLILVGIGGGLGAMSRFAL), 35 to 55 (IGILLCNIIGSLIIGMMAAFL), 72 to 92 (LFVTGFLGGFTTFSSFSLDIL), and 107 to 127 (ILVSVIVSLIAVILGFYFIMG). Residues glycine 79 and threonine 82 each coordinate Na(+).

The protein belongs to the fluoride channel Fluc/FEX (TC 1.A.43) family.

It localises to the cell inner membrane. It catalyses the reaction fluoride(in) = fluoride(out). With respect to regulation, na(+) is not transported, but it plays an essential structural role and its presence is essential for fluoride channel function. Functionally, fluoride-specific ion channel. Important for reducing fluoride concentration in the cell, thus reducing its toxicity. This chain is Fluoride-specific ion channel FluC, found in Francisella philomiragia subsp. philomiragia (strain ATCC 25017 / CCUG 19701 / FSC 153 / O#319-036).